Reading from the N-terminus, the 323-residue chain is MADDFAYLNARVRVRRGTLLKESFFQEALDLSFADFLRLLSETVYGGELAGQGLPDVDRAVLRTQAKLVGDLPRLVTGEAREAVRLLLLRNDLHNLQALLRAKATGRPFEEVLLLPGTLREEVWRQAYEAQDPAGMAQVLAVPGHPLARALRAVLRETQDLARVEALLAKRFFEDVAKAAKGLDQPALRDYLALEVDAENLRTAFKLQGSGLAPDAFFLKGGRFVDRVRFARLMEGDYAVLDELSGTPFSGLSGVRDLKALERGLRCVLLKEAKKGVQDPLGVGLVLAYVKEREWEAVRLRLLARRAYFGLPRAQVEEEVVCP.

Belongs to the V-ATPase V0D/AC39 subunit family.

Its function is as follows. Produces ATP from ADP in the presence of a proton gradient across the membrane. This Thermus thermophilus (strain ATCC 27634 / DSM 579 / HB8) protein is V-type ATP synthase subunit C (atpC).